A 657-amino-acid chain; its full sequence is Protein FAM200B (657 aa).

The protein belongs to the FAM200 family.

This is Protein FAM200B from Homo sapiens (Human).